Here is a 203-residue protein sequence, read N- to C-terminus: Large ribosomal subunit protein bL25 (203 aa).

It belongs to the bacterial ribosomal protein bL25 family. CTC subfamily. As to quaternary structure, part of the 50S ribosomal subunit; part of the 5S rRNA/L5/L18/L25 subcomplex. Contacts the 5S rRNA. Binds to the 5S rRNA independently of L5 and L18.

Its function is as follows. This is one of the proteins that binds to the 5S RNA in the ribosome where it forms part of the central protuberance. This is Large ribosomal subunit protein bL25 from Cupriavidus metallidurans (strain ATCC 43123 / DSM 2839 / NBRC 102507 / CH34) (Ralstonia metallidurans).